Reading from the N-terminus, the 456-residue chain is Glycine--tRNA ligase (456 aa).

The substrate site is built by Arg98 and Glu168. Residues 200 to 202, 210 to 215, 285 to 286, and 329 to 332 each bind ATP; these read RNE, FRTREF, EL, and GVER. 215 to 219 lines the substrate pocket; the sequence is FEQME. 325–329 is a binding site for substrate; it reads EPSVG.

This sequence belongs to the class-II aminoacyl-tRNA synthetase family. Homodimer.

It is found in the cytoplasm. The catalysed reaction is tRNA(Gly) + glycine + ATP = glycyl-tRNA(Gly) + AMP + diphosphate. In terms of biological role, catalyzes the attachment of glycine to tRNA(Gly). The protein is Glycine--tRNA ligase of Mycoplasma mycoides subsp. mycoides SC (strain CCUG 32753 / NCTC 10114 / PG1).